A 390-amino-acid chain; its full sequence is Magnesium-protoporphyrin IX monomethyl ester [oxidative] cyclase (390 aa).

This sequence belongs to the AcsF family. It depends on Fe cation as a cofactor.

It carries out the reaction Mg-protoporphyrin IX 13-monomethyl ester + 3 NADPH + 3 O2 + 2 H(+) = 3,8-divinyl protochlorophyllide a + 3 NADP(+) + 5 H2O. Its pathway is porphyrin-containing compound metabolism; chlorophyll biosynthesis (light-independent). In terms of biological role, catalyzes the formation of the isocyclic ring in chlorophyll biosynthesis. Mediates the cyclase reaction, which results in the formation of divinylprotochlorophyllide (Pchlide) characteristic of all chlorophylls from magnesium-protoporphyrin IX 13-monomethyl ester (MgPMME). The sequence is that of Magnesium-protoporphyrin IX monomethyl ester [oxidative] cyclase from Prochlorococcus marinus (strain AS9601).